The primary structure comprises 350 residues: MIKRYPTRKIKVGNVDVGGDAPISVQSMTYSKTKDIESTLDQINRLYFAGADIVRVAVLDEEDALALKEIKQKSPLPVIADIHFNYRLGLKAAEVVDGLRINPGNIGGKERVKAIVDACKARKIPIRIGVNAGSLEDHLENKYGQTPKAMVESALWHIKFLEDLDFFDIKVSLKASDVQRTVEAYRMLRPLVDYPFHLGVTEAGTKFHATIKSAAAFGALLLDGIGDTMRVSITGELEEEIKVGKAILKDLGLSKEGVNIISCPTCGRIEVDLPPIVEAVEEATKHIKKPLNLAVMGCVVNAIGEAKEADVAIACGKGYGLIIKKGEIIGKYKEEELLEKFLEEVKKESE.

Cys263, Cys266, Cys298, and Glu305 together coordinate [4Fe-4S] cluster.

It belongs to the IspG family. [4Fe-4S] cluster is required as a cofactor.

The enzyme catalyses (2E)-4-hydroxy-3-methylbut-2-enyl diphosphate + oxidized [flavodoxin] + H2O + 2 H(+) = 2-C-methyl-D-erythritol 2,4-cyclic diphosphate + reduced [flavodoxin]. Its pathway is isoprenoid biosynthesis; isopentenyl diphosphate biosynthesis via DXP pathway; isopentenyl diphosphate from 1-deoxy-D-xylulose 5-phosphate: step 5/6. In terms of biological role, converts 2C-methyl-D-erythritol 2,4-cyclodiphosphate (ME-2,4cPP) into 1-hydroxy-2-methyl-2-(E)-butenyl 4-diphosphate. This Nautilia profundicola (strain ATCC BAA-1463 / DSM 18972 / AmH) protein is 4-hydroxy-3-methylbut-2-en-1-yl diphosphate synthase (flavodoxin).